We begin with the raw amino-acid sequence, 926 residues long: Storkhead-box protein 2 (926 aa).

7 disordered regions span residues 1–32 (MKKTRSTTLRRAWPSSDFSDRASDRMRSRSEK), 338–391 (EEEK…HLDI), 452–529 (EMPF…SYID), 564–588 (KEPSSACSLLEPGKPPESLPSYGEL), 632–672 (GVKK…GGVA), 724–803 (LKSH…GTMQ), and 825–926 (LAPK…VTSV). Over residues 18–32 (FSDRASDRMRSRSEK) the composition is skewed to basic and acidic residues. Residues 353–378 (HSGRSKKSRTHRKSHGKSRSHSKTRV) are compositionally biased toward basic residues. Over residues 379–391 (SKGDPSDGSHLDI) the composition is skewed to basic and acidic residues. Basic residues predominate over residues 463–472 (SHSKVHRSHS). Residues 473–495 (HTQDRRSRNERSNKAKERSRSMD) show a composition bias toward basic and acidic residues. Residues 518–529 (QDDQTPSQSYID) show a composition bias toward polar residues. A compositionally biased stretch (basic and acidic residues) spans 632-658 (GVKKLSPSDRQVPHSSREPVGHKEESP). The segment covering 746–769 (LGTSAAQAMPASQRQQESGGNQEA) has biased composition (polar residues). Residues 785–799 (GANKNTEEEKNREDV) are compositionally biased toward basic and acidic residues. 2 stretches are compositionally biased toward polar residues: residues 847-884 (MDSSSITVDSGFNSPRTRESLASNTSSIVESNRRQNPA) and 914-926 (KPSNCLQASVTSV).

The protein is Storkhead-box protein 2 (STOX2) of Homo sapiens (Human).